Reading from the N-terminus, the 611-residue chain is Actin-binding LIM protein 2 (611 aa).

LIM zinc-binding domains lie at 22–81 (ILCN…LYGT), 81–141 (TRCF…VSVG), 151–210 (RSCG…KFGI), and 210–270 (IRCD…ARTE). Zn(2+) contacts are provided by cysteine 83, cysteine 86, histidine 103, cysteine 106, cysteine 109, cysteine 112, cysteine 131, and cysteine 134. Zn(2+) contacts are provided by cysteine 212, cysteine 215, histidine 232, cysteine 235, cysteine 238, cysteine 241, histidine 260, and cysteine 263. The segment covering 269–278 (TEDRNKETRT) has biased composition (basic and acidic residues). 2 disordered regions span residues 269 to 295 (TEDR…SGSP) and 336 to 527 (YISH…DQRN). 2 stretches are compositionally biased toward low complexity: residues 279–295 (SSES…SGSP) and 363–372 (SSPSSTGSVS). 4 positions are modified to phosphoserine: serine 282, serine 294, serine 364, and serine 367. The span at 393–404 (SGRSTPSLSVLS) shows a compositional bias: polar residues. Serine 452 bears the Phosphoserine mark. A Phosphothreonine modification is found at threonine 472. Residues 473-488 (RTNSPDLDTQSLSHSS) show a composition bias toward polar residues. A phosphoserine mark is found at serine 476 and serine 578. Residues 543-611 (MREYKIYPYD…NDLKKKALLF (69 aa)) enclose the HP domain.

Interacts with F-actin and ABRA. Highly expressed in skeletal muscle.

The protein localises to the cytoplasm. In terms of biological role, may act as scaffold protein. May stimulate ABRA activity and ABRA-dependent SRF transcriptional activity. This is Actin-binding LIM protein 2 (ABLIM2) from Homo sapiens (Human).